The following is a 257-amino-acid chain: Probable 6-phosphogluconolactonase (257 aa).

It belongs to the glucosamine/galactosamine-6-phosphate isomerase family. 6-phosphogluconolactonase subfamily.

It catalyses the reaction 6-phospho-D-glucono-1,5-lactone + H2O = 6-phospho-D-gluconate + H(+). The protein operates within carbohydrate degradation; pentose phosphate pathway; D-ribulose 5-phosphate from D-glucose 6-phosphate (oxidative stage): step 2/3. Functionally, hydrolysis of 6-phosphogluconolactone to 6-phosphogluconate. In Schizosaccharomyces pombe (strain 972 / ATCC 24843) (Fission yeast), this protein is Probable 6-phosphogluconolactonase.